Here is a 237-residue protein sequence, read N- to C-terminus: Ribonuclease PH (237 aa).

Phosphate-binding positions include Arg86 and 124–126 (GTR).

The protein belongs to the RNase PH family. In terms of assembly, homohexameric ring arranged as a trimer of dimers.

It carries out the reaction tRNA(n+1) + phosphate = tRNA(n) + a ribonucleoside 5'-diphosphate. In terms of biological role, phosphorolytic 3'-5' exoribonuclease that plays an important role in tRNA 3'-end maturation. Removes nucleotide residues following the 3'-CCA terminus of tRNAs; can also add nucleotides to the ends of RNA molecules by using nucleoside diphosphates as substrates, but this may not be physiologically important. Probably plays a role in initiation of 16S rRNA degradation (leading to ribosome degradation) during starvation. This Xanthobacter autotrophicus (strain ATCC BAA-1158 / Py2) protein is Ribonuclease PH.